The primary structure comprises 360 residues: D-alanine--D-alanine ligase (360 aa).

The 205-residue stretch at 149-353 (KKLMAAEGLP…YEELLDVLVQ (205 aa)) folds into the ATP-grasp domain. 176-231 (KNLLGLPVFVKPARGGSSIGISRVTAWEDFNKAVGLARAHDEKVIVESEIVGSEVE) is an ATP binding site. Mg(2+) contacts are provided by D308, E320, and N322.

It belongs to the D-alanine--D-alanine ligase family. Requires Mg(2+) as cofactor. The cofactor is Mn(2+).

Its subcellular location is the cytoplasm. It catalyses the reaction 2 D-alanine + ATP = D-alanyl-D-alanine + ADP + phosphate + H(+). It functions in the pathway cell wall biogenesis; peptidoglycan biosynthesis. Cell wall formation. The protein is D-alanine--D-alanine ligase of Corynebacterium glutamicum (strain R).